A 668-amino-acid polypeptide reads, in one-letter code: MSDPFAHLLTSLKNKDSASASKETTPQSSNSPSITGSAVADVARTDKSPNDSLHSISAPPLIPSPKVDFSAPPLVPTNSTTKSNTANNTPPSALANTDDDFNQLFGMGTVTTTDTIQKPDEDYYGSKEDHLYNGDDALVDEVKDMEIARLMSLGLSIEEATEFYENDVTYERYLEILKSKQKERNDLAIRKKESGIKMEKSGLSNIVGTDSNNLFSMATDFFNKGKKLVDQWTSFPPEANDRLNNYSKTHDKVEDYDLPQVNDSPNRILFEDNEVVENLPPADNPDQDLLTDFETKIDITKRTAPDVSHSSSPTSGILIEENSRRNEPLIEDSLLDFSEGNLTNSKSNEDSTLFNENSNTDSTIPISDIELSGYNEFKAKGTSLFKNGDYINSLQEYEKSLNTLPLNHPLRIIALSNIIASQLKIGEYSKSIENSSMALELFPSSKAKWKNKISNSDPERSFNDIWPKIMIRRAESFEHLESFKKALETYQELIKKNFFDDKIMQGKRRCQDFINPPPVKKSMPVKKKTTTTSPATKKQNLTASSSNSPISVDSTSEIKKRELENAKLALYDKVFEKISSWKDGKDDDIRHLLANLSSLLTWCNWKDVSMQDLVMPKRVKITYMKAVAKTHPDKIPESLSLENKMIAENIFSTLSIAWDKFKLQNDIN.

The segment at M1–A95 is disordered. A CB1 region spans residues M1–D100. A compositionally biased stretch (polar residues) spans S17–G36. A phosphoserine mark is found at S52 and S64. A compositionally biased stretch (low complexity) spans P76–S92. Positions D140–K180 constitute a UBA domain. A CB2 region spans residues E238–R302. Residues S264, S308, and S312 each carry the phosphoserine modification. 2 disordered regions span residues R302–S323 and E339–N359. Residues T303–S362 form a CB3 region. Over residues G340 to N359 the composition is skewed to polar residues. TPR repeat units follow at residues Y374–N407, I412–S445, and P467–D500. Residues Q511 to S556 form a disordered region. Over residues Q539 to T555 the composition is skewed to polar residues. One can recognise a J domain in the interval C603 to N668.

Interacts with the clathrin light and heavy chains CLC1 and CHC1, respectively. Binds to clathrin with its N-terminal domain containing 3 clathrin-binding (CB) motifs. Association with clathrin is transient. Binds to polyubiquitin and ubiquitinated proteins.

It localises to the cytoplasm. The protein resides in the endoplasmic reticulum membrane. Functionally, cofactor for the uncoating of clathrin-coated vesicles (CCVs) by Hsp70-type chaperones (SSA1/2/3 and SSB1/2). Coat disassembly is important for fusion of vesicles with target membranes and for recycling components of clathrin coats to the cytoplasm for further rounds of vesicle formation. Binds to assembled clathrin and recruits the ATP-activated chaperone to CCVs. Stimulates the ATPase activity of the clathrin-associated Hsp70-type chaperone SSA1, which then disrupts clathrin-clathrin interactions, leading to release of the clathrin coat. In addition, prevents unproductive clathrin assembly in the cell. Also required for cortical endoplasmic reticulum inheritance. The polypeptide is Auxilin-like clathrin uncoating factor SWA2 (SWA2) (Saccharomyces cerevisiae (strain ATCC 204508 / S288c) (Baker's yeast)).